Reading from the N-terminus, the 511-residue chain is Glucans biosynthesis protein G (511 aa).

Positions Met-1–Ala-22 are cleaved as a signal peptide.

The protein belongs to the OpgD/OpgG family.

The protein resides in the periplasm. Its pathway is glycan metabolism; osmoregulated periplasmic glucan (OPG) biosynthesis. Functionally, involved in the biosynthesis of osmoregulated periplasmic glucans (OPGs). The sequence is that of Glucans biosynthesis protein G from Escherichia coli O8 (strain IAI1).